Reading from the N-terminus, the 185-residue chain is MISTNDFRTGLTIEVDGDVYTVVEFMHVKPGKGSAFVRTKLKNRRTGAVIERTFRAGEKVNRAHVERREMQYLYNDGDNYYFMDTETFEQLSLRKEQLEDAIKYLKDNMNIFVLTYNGETIGIELPNSVELKVVETEPGIKGDTATGGTKNAVLETGAVIQVPLFIETGDVVRIDTRTGEYIERA.

The protein belongs to the elongation factor P family.

It is found in the cytoplasm. It participates in protein biosynthesis; polypeptide chain elongation. Functionally, involved in peptide bond synthesis. Stimulates efficient translation and peptide-bond synthesis on native or reconstituted 70S ribosomes in vitro. Probably functions indirectly by altering the affinity of the ribosome for aminoacyl-tRNA, thus increasing their reactivity as acceptors for peptidyl transferase. The chain is Elongation factor P from Moorella thermoacetica (strain ATCC 39073 / JCM 9320).